The following is a 130-amino-acid chain: Small ribosomal subunit protein uS11 (130 aa).

This sequence belongs to the universal ribosomal protein uS11 family. As to quaternary structure, part of the 30S ribosomal subunit. Interacts with proteins S7 and S18. Binds to IF-3.

Its function is as follows. Located on the platform of the 30S subunit, it bridges several disparate RNA helices of the 16S rRNA. Forms part of the Shine-Dalgarno cleft in the 70S ribosome. This Syntrophus aciditrophicus (strain SB) protein is Small ribosomal subunit protein uS11.